Reading from the N-terminus, the 417-residue chain is 4-hydroxy-3-methylbut-2-enyl diphosphate reductase (417 aa).

Cys-56 is a [4Fe-4S] cluster binding site. Position 86 (His-86) interacts with (2E)-4-hydroxy-3-methylbut-2-enyl diphosphate. His-86 contributes to the dimethylallyl diphosphate binding site. His-86 is a binding site for isopentenyl diphosphate. Cys-151 lines the [4Fe-4S] cluster pocket. His-179 lines the (2E)-4-hydroxy-3-methylbut-2-enyl diphosphate pocket. His-179 contributes to the dimethylallyl diphosphate binding site. Residue His-179 coordinates isopentenyl diphosphate. The active-site Proton donor is the Glu-181. Thr-244 is a (2E)-4-hydroxy-3-methylbut-2-enyl diphosphate binding site. Cys-282 is a [4Fe-4S] cluster binding site. (2E)-4-hydroxy-3-methylbut-2-enyl diphosphate is bound by residues Ser-311, Ser-312, Asn-313, and Ser-374. Residues Ser-311, Ser-312, Asn-313, and Ser-374 each coordinate dimethylallyl diphosphate. 4 residues coordinate isopentenyl diphosphate: Ser-311, Ser-312, Asn-313, and Ser-374.

The protein belongs to the IspH family. [4Fe-4S] cluster is required as a cofactor.

It carries out the reaction isopentenyl diphosphate + 2 oxidized [2Fe-2S]-[ferredoxin] + H2O = (2E)-4-hydroxy-3-methylbut-2-enyl diphosphate + 2 reduced [2Fe-2S]-[ferredoxin] + 2 H(+). The catalysed reaction is dimethylallyl diphosphate + 2 oxidized [2Fe-2S]-[ferredoxin] + H2O = (2E)-4-hydroxy-3-methylbut-2-enyl diphosphate + 2 reduced [2Fe-2S]-[ferredoxin] + 2 H(+). It participates in isoprenoid biosynthesis; dimethylallyl diphosphate biosynthesis; dimethylallyl diphosphate from (2E)-4-hydroxy-3-methylbutenyl diphosphate: step 1/1. It functions in the pathway isoprenoid biosynthesis; isopentenyl diphosphate biosynthesis via DXP pathway; isopentenyl diphosphate from 1-deoxy-D-xylulose 5-phosphate: step 6/6. Catalyzes the conversion of 1-hydroxy-2-methyl-2-(E)-butenyl 4-diphosphate (HMBPP) into a mixture of isopentenyl diphosphate (IPP) and dimethylallyl diphosphate (DMAPP). Acts in the terminal step of the DOXP/MEP pathway for isoprenoid precursor biosynthesis. The polypeptide is 4-hydroxy-3-methylbut-2-enyl diphosphate reductase (Gloeobacter violaceus (strain ATCC 29082 / PCC 7421)).